The sequence spans 1396 residues: ABC-type transporter cicA (1396 aa).

The interval 1 to 40 (MRLSSEAKIAESGGQPPTAGSRSETGSESTEAESADPKAQ) is disordered. Residues 18-29 (TAGSRSETGSES) show a composition bias toward low complexity. 3 consecutive transmembrane segments (helical) span residues 142-162 (FLLG…APYL), 191-211 (GFVV…NQFL), and 300-320 (MFHI…LLLV). An ABC transmembrane type-1 1 domain is found at 143–466 (LLGGFCHLIS…LPLVLGQITD (324 aa)). N-linked (GlcNAc...) asparagine glycosylation is present at Asn-321. Transmembrane regions (helical) follow at residues 324 to 344 (YSAL…TYAV), 409 to 429 (ILCV…ITYA), and 440 to 460 (IFSS…LPLV). The span at 510-533 (AADKEAEKVEKKANPRRTEPKSEA) shows a compositional bias: basic and acidic residues. The segment at 510–543 (AADKEAEKVEKKANPRRTEPKSEAPTDSAESDEP) is disordered. The region spanning 525-751 (RRTEPKSEAP…NDLFKQLMST (227 aa)) is the ABC transporter 1 domain. 563–570 (GTVGSGKS) provides a ligand contact to ATP. N-linked (GlcNAc...) asparagine glycosylation is present at Asn-604. The segment at 751–787 (TASQDSKEDEEEATEVVEEEAEKQAQQEPTKPAAALM) is disordered. A compositionally biased stretch (acidic residues) spans 757 to 771 (KEDEEEATEVVEEEA). Helical transmembrane passes span 816-836 (LAIL…NLWL) and 852-872 (YIGI…IFST). Positions 816-1093 (LAILFLLAFA…TVRQLAEVEN (278 aa)) constitute an ABC transmembrane type-1 2 domain. N-linked (GlcNAc...) asparagine glycosylation is present at Asn-880. The next 4 membrane-spanning stretches (helical) occupy residues 930–947 (MYAI…LIIV), 951–970 (YFAI…SNYY), 1036–1056 (LSVR…VLVV), and 1065–1085 (SISG…QFTV). Residues Asn-1096, Asn-1150, and Asn-1154 are each glycosylated (N-linked (GlcNAc...) asparagine). The ABC transporter 2 domain maps to 1131–1380 (ITFDNVAMRY…EDGIFRAMCE (250 aa)). 1165 to 1172 (GRTGAGKS) provides a ligand contact to ATP.

This sequence belongs to the ABC transporter superfamily. ABCC family. Conjugate transporter (TC 3.A.1.208) subfamily.

It localises to the cell membrane. In terms of biological role, ABC-type transporter; part of the gene cluster that mediates the biosynthesis of cichorine, a phytotoxin active against knapweed, corn, and soybeans. CicA is probably involved in the secretion of cichorine. The sequence is that of ABC-type transporter cicA from Emericella nidulans (strain FGSC A4 / ATCC 38163 / CBS 112.46 / NRRL 194 / M139) (Aspergillus nidulans).